A 328-amino-acid polypeptide reads, in one-letter code: GMP reductase (328 aa).

Catalysis depends on Cys177, which acts as the Thioimidate intermediate. 206–229 (IVADGGIRYNGDIAKSIRFGASMV) contributes to the NADP(+) binding site.

Belongs to the IMPDH/GMPR family. GuaC type 2 subfamily.

It carries out the reaction IMP + NH4(+) + NADP(+) = GMP + NADPH + 2 H(+). Catalyzes the irreversible NADPH-dependent deamination of GMP to IMP. It functions in the conversion of nucleobase, nucleoside and nucleotide derivatives of G to A nucleotides, and in maintaining the intracellular balance of A and G nucleotides. The chain is GMP reductase from Levilactobacillus brevis (strain ATCC 367 / BCRC 12310 / CIP 105137 / JCM 1170 / LMG 11437 / NCIMB 947 / NCTC 947) (Lactobacillus brevis).